The primary structure comprises 200 residues: ATP-dependent Clp protease proteolytic subunit 2 (200 aa).

The Nucleophile role is filled by Ser99. His123 is a catalytic residue.

This sequence belongs to the peptidase S14 family. Fourteen ClpP subunits assemble into 2 heptameric rings which stack back to back to give a disk-like structure with a central cavity, resembling the structure of eukaryotic proteasomes.

The protein localises to the cytoplasm. The catalysed reaction is Hydrolysis of proteins to small peptides in the presence of ATP and magnesium. alpha-casein is the usual test substrate. In the absence of ATP, only oligopeptides shorter than five residues are hydrolyzed (such as succinyl-Leu-Tyr-|-NHMec, and Leu-Tyr-Leu-|-Tyr-Trp, in which cleavage of the -Tyr-|-Leu- and -Tyr-|-Trp bonds also occurs).. In terms of biological role, cleaves peptides in various proteins in a process that requires ATP hydrolysis. Has a chymotrypsin-like activity. Plays a major role in the degradation of misfolded proteins. The polypeptide is ATP-dependent Clp protease proteolytic subunit 2 (Symbiobacterium thermophilum (strain DSM 24528 / JCM 14929 / IAM 14863 / T)).